We begin with the raw amino-acid sequence, 552 residues long: Phosphoglucomutase (552 aa).

Serine 143 acts as the Phosphoserine intermediate in catalysis. Residues serine 143, aspartate 295, aspartate 297, and aspartate 299 each coordinate Mg(2+).

The protein belongs to the phosphohexose mutase family. It depends on Mg(2+) as a cofactor.

It catalyses the reaction alpha-D-glucose 1-phosphate = alpha-D-glucose 6-phosphate. The protein operates within glycolipid metabolism; diglucosyl-diacylglycerol biosynthesis. Catalyzes the interconversion between glucose-6-phosphate and alpha-glucose-1-phosphate. This is the first step in the biosynthesis of diglucosyl-diacylglycerol (Glc2-DAG), i.e. the predominant glycolipid found in the S.aureus membrane, which is also used as a membrane anchor for lipoteichoic acid (LTA). The chain is Phosphoglucomutase (pgcA) from Staphylococcus aureus (strain Mu50 / ATCC 700699).